Consider the following 72-residue polypeptide: Translation initiation factor IF-1 (72 aa).

Positions 1 to 72 constitute an S1-like domain; the sequence is MAKEDCIEME…SKGRIIYRAR (72 aa).

This sequence belongs to the IF-1 family. As to quaternary structure, component of the 30S ribosomal translation pre-initiation complex which assembles on the 30S ribosome in the order IF-2 and IF-3, IF-1 and N-formylmethionyl-tRNA(fMet); mRNA recruitment can occur at any time during PIC assembly.

Its subcellular location is the cytoplasm. In terms of biological role, one of the essential components for the initiation of protein synthesis. Stabilizes the binding of IF-2 and IF-3 on the 30S subunit to which N-formylmethionyl-tRNA(fMet) subsequently binds. Helps modulate mRNA selection, yielding the 30S pre-initiation complex (PIC). Upon addition of the 50S ribosomal subunit IF-1, IF-2 and IF-3 are released leaving the mature 70S translation initiation complex. The polypeptide is Translation initiation factor IF-1 (Pseudoalteromonas atlantica (strain T6c / ATCC BAA-1087)).